A 59-amino-acid polypeptide reads, in one-letter code: Large ribosomal subunit protein bL33 (59 aa).

Belongs to the bacterial ribosomal protein bL33 family.

This Borrelia recurrentis (strain A1) protein is Large ribosomal subunit protein bL33.